Here is a 330-residue protein sequence, read N- to C-terminus: Ketol-acid reductoisomerase (NADP(+)) (330 aa).

The region spanning 2–182 (ARLYYDTDAN…GGTRAGILET (181 aa)) is the KARI N-terminal Rossmann domain. Residues 25-28 (YGSQ), S51, S53, and 83-86 (DEVQ) contribute to the NADP(+) site. The active site involves H108. G134 contributes to the NADP(+) binding site. Residues 183–328 (TFREETETDL…RELRAMFSWL (146 aa)) enclose the KARI C-terminal knotted domain. Residues D191, E195, E227, and E231 each contribute to the Mg(2+) site. Position 252 (S252) interacts with substrate.

This sequence belongs to the ketol-acid reductoisomerase family. Mg(2+) serves as cofactor.

It carries out the reaction (2R)-2,3-dihydroxy-3-methylbutanoate + NADP(+) = (2S)-2-acetolactate + NADPH + H(+). It catalyses the reaction (2R,3R)-2,3-dihydroxy-3-methylpentanoate + NADP(+) = (S)-2-ethyl-2-hydroxy-3-oxobutanoate + NADPH + H(+). It participates in amino-acid biosynthesis; L-isoleucine biosynthesis; L-isoleucine from 2-oxobutanoate: step 2/4. It functions in the pathway amino-acid biosynthesis; L-valine biosynthesis; L-valine from pyruvate: step 2/4. Functionally, involved in the biosynthesis of branched-chain amino acids (BCAA). Catalyzes an alkyl-migration followed by a ketol-acid reduction of (S)-2-acetolactate (S2AL) to yield (R)-2,3-dihydroxy-isovalerate. In the isomerase reaction, S2AL is rearranged via a Mg-dependent methyl migration to produce 3-hydroxy-3-methyl-2-ketobutyrate (HMKB). In the reductase reaction, this 2-ketoacid undergoes a metal-dependent reduction by NADPH to yield (R)-2,3-dihydroxy-isovalerate. This is Ketol-acid reductoisomerase (NADP(+)) from Synechococcus sp. (strain JA-2-3B'a(2-13)) (Cyanobacteria bacterium Yellowstone B-Prime).